We begin with the raw amino-acid sequence, 64 residues long: Disintegrin CV-11-beta (64 aa).

One can recognise a Disintegrin domain in the interval 1-64; the sequence is NSAHPCCDPV…SDCPRNPWKD (64 aa). Cystine bridges form between Cys-6/Cys-29, Cys-20/Cys-26, Cys-25/Cys-50, and Cys-38/Cys-57. Positions 42 to 44 match the Cell attachment site motif; sequence RGD.

Belongs to the disintegrin family. Dimeric disintegrin subfamily. In terms of assembly, heterodimer with subunit alpha; disulfide-linked. In terms of tissue distribution, expressed by the venom gland.

It is found in the secreted. Functionally, inhibits ADP-induced human platelet aggregation. Antagonist of alpha-IIb/beta-3 (ITGA2B/ITGB3). The chain is Disintegrin CV-11-beta from Cerastes vipera (Sahara sand viper).